The primary structure comprises 243 residues: MSEMIYGIHAVQALLERAPERFQEAFILKGREDKRLLPLIHALESQGVVIQLANRQYLDEKSDGAVHQGIIARVKPGRQYQENDLPDLIALHDRPFLLILDGVTDPHNLGACLRSADAAGVHAVIVPKDRSAQLNATAKKVACGAAESVPLIRVTNLARTMRMLQEENIWIVGTAGEADHTLYQSKMPGRMALVMGAEGEGMRRLTREHCDELISIPMAGSVSSLNVSVATGICLFEAVRQRT.

The S-adenosyl-L-methionine site is built by Gly-196, Ile-216, and Leu-225.

The protein belongs to the class IV-like SAM-binding methyltransferase superfamily. RNA methyltransferase TrmH family. RlmB subfamily. Homodimer.

It is found in the cytoplasm. The catalysed reaction is guanosine(2251) in 23S rRNA + S-adenosyl-L-methionine = 2'-O-methylguanosine(2251) in 23S rRNA + S-adenosyl-L-homocysteine + H(+). Specifically methylates the ribose of guanosine 2251 in 23S rRNA. This chain is 23S rRNA (guanosine-2'-O-)-methyltransferase RlmB, found in Salmonella typhi.